The chain runs to 137 residues: uncharacterized protein (137 aa).

The first 34 residues, 1–34, serve as a signal peptide directing secretion; it reads MAALSRALGPLRTPAPPLWIGLFLVATGSQQSLA. A compositionally biased stretch (polar residues) spans 33-45; sequence LAQPLPGNTTEAT. Disordered stretches follow at residues 33–54 and 98–137; these read LAQP…ASGS and VLSP…LGAS. N-linked (GlcNAc...) asparagine glycosylation occurs at Asn-40. Basic and acidic residues predominate over residues 121-137; that stretch reads KLKEPQPQDHKPGLGAS.

The protein localises to the secreted. This is an uncharacterized protein from Homo sapiens (Human).